A 360-amino-acid chain; its full sequence is GDSL esterase/lipase At2g31550 (360 aa).

An N-terminal signal peptide occupies residues 1–27 (MSTSKAITLTLFITTTLLASCDAAANA). Asn26 carries N-linked (GlcNAc...) asparagine glycosylation. Catalysis depends on Ser42, which acts as the Nucleophile. Residues Asn104 and Asn326 are each glycosylated (N-linked (GlcNAc...) asparagine). Active-site residues include Asp334 and His337.

This sequence belongs to the 'GDSL' lipolytic enzyme family.

It is found in the secreted. In Arabidopsis thaliana (Mouse-ear cress), this protein is GDSL esterase/lipase At2g31550.